The following is an 87-amino-acid chain: Small ribosomal subunit protein uS15c (87 aa).

This sequence belongs to the universal ribosomal protein uS15 family. Part of the 30S ribosomal subunit.

It localises to the plastid. It is found in the chloroplast. This chain is Small ribosomal subunit protein uS15c (rps15), found in Solanum lycopersicum (Tomato).